The chain runs to 313 residues: Olfactory receptor 1D2 (313 aa).

Over 1–25 (MDGGNQSEGSEFLLLGMSESPEQQR) the chain is Extracellular. N-linked (GlcNAc...) asparagine glycosylation occurs at Asn5. A helical membrane pass occupies residues 26 to 49 (ILFWMFLSMYLVTVLGNVLIILAI). Over 50–57 (SSDSRLHT) the chain is Cytoplasmic. Residues 58–79 (PMYFFLANLSFTDLFFVTNTIP) form a helical membrane-spanning segment. Over 80–100 (KMLVNLQSQDKAISYAGCLTQ) the chain is Extracellular. A disulfide bridge links Cys97 with Cys189. Residues 101–120 (LYFLLSLVTLDNLILAVMAY) traverse the membrane as a helical segment. Residues 121 to 139 (DRYVAICCPLHYVTAMSPR) are Cytoplasmic-facing. A helical transmembrane segment spans residues 140-158 (LCILLLSLCWVFSVLYGLI). Over 159-196 (HTLLMTRVTFCGSRKIHYLFCEMYFLLRLACSNIQINH) the chain is Extracellular. Residue Asn195 is glycosylated (N-linked (GlcNAc...) asparagine). A helical transmembrane segment spans residues 197 to 219 (TVLXATGCFIFLIPLGFMIXSYA). At 220–236 (RIVRAILRIPSATGKYK) the chain is on the cytoplasmic side. A helical membrane pass occupies residues 237 to 259 (AFSTCASHLAVVSLFYGTLGMVY). Residues 260–271 (LQPLQTYSTKDS) lie on the Extracellular side of the membrane. A helical membrane pass occupies residues 272–291 (VATVMYAVVTPMMNPFIYSL). The Cytoplasmic portion of the chain corresponds to 292–313 (RNKDIHGALGRLLQGKAFQKLT).

Belongs to the G-protein coupled receptor 1 family.

It localises to the cell membrane. Functionally, odorant receptor. The protein is Olfactory receptor 1D2 (OR1D2) of Pongo pygmaeus (Bornean orangutan).